We begin with the raw amino-acid sequence, 404 residues long: Serine/threonine transporter SstT (404 aa).

The next 9 membrane-spanning stretches (helical) occupy residues 17–37 (IGIG…VTAI), 44–64 (FVGA…VQAI), 75–95 (MTLI…VAVI), 138–158 (ALAT…GLAL), 179–199 (IVVW…FSTV), 212–232 (LLIL…NPLL), 287–307 (IPLG…VLTL), 319–339 (FLTA…ASGV), and 354–374 (FGIS…VGVI).

It belongs to the dicarboxylate/amino acid:cation symporter (DAACS) (TC 2.A.23) family.

It is found in the cell membrane. The enzyme catalyses L-serine(in) + Na(+)(in) = L-serine(out) + Na(+)(out). It catalyses the reaction L-threonine(in) + Na(+)(in) = L-threonine(out) + Na(+)(out). Involved in the import of serine and threonine into the cell, with the concomitant import of sodium (symport system). This chain is Serine/threonine transporter SstT, found in Streptococcus equi subsp. zooepidemicus (strain H70).